Here is a 348-residue protein sequence, read N- to C-terminus: Phosphoribosylformylglycinamidine cyclo-ligase (348 aa).

It belongs to the AIR synthase family.

Its subcellular location is the cytoplasm. The catalysed reaction is 2-formamido-N(1)-(5-O-phospho-beta-D-ribosyl)acetamidine + ATP = 5-amino-1-(5-phospho-beta-D-ribosyl)imidazole + ADP + phosphate + H(+). Its pathway is purine metabolism; IMP biosynthesis via de novo pathway; 5-amino-1-(5-phospho-D-ribosyl)imidazole from N(2)-formyl-N(1)-(5-phospho-D-ribosyl)glycinamide: step 2/2. The sequence is that of Phosphoribosylformylglycinamidine cyclo-ligase from Geobacter sp. (strain M21).